Consider the following 403-residue polypeptide: Argininosuccinate synthase (403 aa).

Residues Ala-13 to Ser-21 and Ala-40 each bind ATP. Positions 92 and 97 each coordinate L-citrulline. Gly-122 contributes to the ATP binding site. Residues Thr-124, Asn-128, and Asp-129 each contribute to the L-aspartate site. Position 128 (Asn-128) interacts with L-citrulline. Residues Arg-132, Ser-181, Ser-190, Glu-266, and Tyr-278 each coordinate L-citrulline.

This sequence belongs to the argininosuccinate synthase family. Type 1 subfamily. As to quaternary structure, homotetramer.

It is found in the cytoplasm. It carries out the reaction L-citrulline + L-aspartate + ATP = 2-(N(omega)-L-arginino)succinate + AMP + diphosphate + H(+). It participates in amino-acid biosynthesis; L-arginine biosynthesis; L-arginine from L-ornithine and carbamoyl phosphate: step 2/3. The chain is Argininosuccinate synthase from Aliivibrio fischeri (strain ATCC 700601 / ES114) (Vibrio fischeri).